The primary structure comprises 355 residues: Anthocyanin synthase (355 aa).

Substrate-binding residues include Tyr145 and Lys216. The 100-residue stretch at Leu211–Pro310 folds into the Fe2OG dioxygenase domain. Asn218–Tyr220 is a 2-oxoglutarate binding site. His235 provides a ligand contact to Fe cation. Thr236 contacts substrate. The Fe cation site is built by Asp237 and His291. 2-oxoglutarate is bound by residues Arg301 and Arg301 to Ser303. Residues Glu309 and Lys344 each coordinate substrate.

The protein belongs to the iron/ascorbate-dependent oxidoreductase family. It depends on L-ascorbate as a cofactor. Fe(2+) serves as cofactor. As to expression, expressed in stems and leaves. Expressed at low levels in ovaries.

The catalysed reaction is a (2R,3S,4S)-leucoanthocyanidin + 2-oxoglutarate + O2 = a 4-H-anthocyanidin with a 3-hydroxy group + succinate + CO2 + 2 H2O. The protein operates within pigment biosynthesis; anthocyanin biosynthesis. Involved in anthocyanin biosynthesis by catalyzing the oxidation of leucoanthocyanidins into anthocyanidins. Required for the accumulation of anthocyanin in red-fleshed kiwifruit varieties. This Actinidia chinensis var. chinensis (Chinese soft-hair kiwi) protein is Anthocyanin synthase.